Reading from the N-terminus, the 324-residue chain is UDP-N-acetylenolpyruvoylglucosamine reductase (324 aa).

Residues 36-203 (FRAGGLAELM…THAIFEGFPE (168 aa)) form the FAD-binding PCMH-type domain. The active site involves R183. S232 serves as the catalytic Proton donor. Residue E302 is part of the active site.

Belongs to the MurB family. It depends on FAD as a cofactor.

The protein resides in the cytoplasm. It catalyses the reaction UDP-N-acetyl-alpha-D-muramate + NADP(+) = UDP-N-acetyl-3-O-(1-carboxyvinyl)-alpha-D-glucosamine + NADPH + H(+). It participates in cell wall biogenesis; peptidoglycan biosynthesis. In terms of biological role, cell wall formation. In Sinorhizobium fredii (strain NBRC 101917 / NGR234), this protein is UDP-N-acetylenolpyruvoylglucosamine reductase.